Consider the following 534-residue polypeptide: Glycerol kinase 5 (534 aa).

Ser33 and Thr34 together coordinate ATP. Arg103, Asp280, and Gln281 together coordinate glycerol. ATP is bound by residues Thr302, Gly345, and Gly445.

Belongs to the FGGY kinase family. As to expression, expressed predominantly in sebaceous glands.

Its subcellular location is the cytoplasm. It carries out the reaction glycerol + ATP = sn-glycerol 3-phosphate + ADP + H(+). It functions in the pathway polyol metabolism; glycerol degradation via glycerol kinase pathway; sn-glycerol 3-phosphate from glycerol: step 1/1. In terms of biological role, skin-specific kinase that plays a key role in glycerol metabolism, catalyzing its phosphorylation to produce sn-glycerol 3-phosphate. Involved in skin-specific regulation of sterol regulatory element-binding protein (SREBP) processing and lipid biosynthesis. The sequence is that of Glycerol kinase 5 (Gk5) from Mus musculus (Mouse).